Reading from the N-terminus, the 89-residue chain is Putative ankyrin repeat protein RF_1157 (89 aa).

The stretch at 2-32 is one ANK repeat; it reads YNTTPLNFAINQENNEEVIKYLLANGANPRL.

The chain is Putative ankyrin repeat protein RF_1157 from Rickettsia felis (strain ATCC VR-1525 / URRWXCal2) (Rickettsia azadi).